We begin with the raw amino-acid sequence, 364 residues long: Fructose-bisphosphate aldolase C (364 aa).

Position 5 is a phosphotyrosine (Tyr5). Residues Ser36, Ser39, and Ser45 each carry the phosphoserine modification. Arg56 is a substrate binding site. Lys111 bears the N6-acetyllysine mark. Ser132 is modified (phosphoserine). Lys147 contacts substrate. The active-site Proton acceptor is Glu188. The active-site Schiff-base intermediate with dihydroxyacetone-P is the Lys230.

This sequence belongs to the class I fructose-bisphosphate aldolase family. As to quaternary structure, homotetramer. Interacts with ATP6V1E1.

It carries out the reaction beta-D-fructose 1,6-bisphosphate = D-glyceraldehyde 3-phosphate + dihydroxyacetone phosphate. It functions in the pathway carbohydrate degradation; glycolysis; D-glyceraldehyde 3-phosphate and glycerone phosphate from D-glucose: step 4/4. In Macaca fascicularis (Crab-eating macaque), this protein is Fructose-bisphosphate aldolase C (ALDOC).